Consider the following 220-residue polypeptide: Large ribosomal subunit protein uL10c (220 aa).

The N-terminal 41 residues, 1 to 41 (MEVALLSFSSSLSPLCHQRISTLTPKTSNSPNYPRLPVIRS), are a transit peptide targeting the chloroplast.

Belongs to the universal ribosomal protein uL10 family. Part of the 50S ribosomal subunit.

The protein resides in the plastid. The protein localises to the chloroplast. Its function is as follows. This protein binds directly to 23S ribosomal RNA. This chain is Large ribosomal subunit protein uL10c (RPL10), found in Arabidopsis thaliana (Mouse-ear cress).